The chain runs to 469 residues: Proline--tRNA ligase (469 aa).

It belongs to the class-II aminoacyl-tRNA synthetase family. ProS type 3 subfamily. Homodimer.

Its subcellular location is the cytoplasm. The enzyme catalyses tRNA(Pro) + L-proline + ATP = L-prolyl-tRNA(Pro) + AMP + diphosphate. Its function is as follows. Catalyzes the attachment of proline to tRNA(Pro) in a two-step reaction: proline is first activated by ATP to form Pro-AMP and then transferred to the acceptor end of tRNA(Pro). In Methanobrevibacter smithii (strain ATCC 35061 / DSM 861 / OCM 144 / PS), this protein is Proline--tRNA ligase.